The primary structure comprises 497 residues: tRNA (adenine(58)-N(1))-methyltransferase non-catalytic subunit TRM6 (497 aa).

The segment at 69–102 is disordered; sequence TNGGSLQPKKKKEEPTSETKEAGTDNRNIIDDGK. Residues 79 to 102 show a composition bias toward basic and acidic residues; sequence KKEEPTSETKEAGTDNRNIIDDGK. Residues 94-104 are substrate; the sequence is NRNIIDDGKSQ. Threonine 107 is modified (phosphothreonine). 2 substrate regions span residues 145–154 and 175–182; these read KYIKKKKKKY and REPGKINH. A disordered region spans residues 276 to 354; the sequence is SSEPKDIASV…EKQRRQEEQK (79 aa). A phosphoserine mark is found at serine 298 and serine 305. Residues 311-354 show a composition bias toward basic and acidic residues; the sequence is ESNHPEEQERMEIVSQDPDYKEPKESGSKKDYIQEKQRRQEEQK. 2 residues coordinate substrate: arginine 349 and arginine 377. Substrate regions lie at residues 415-423 and 434-441; these read RERGGVINL and QVLPDRSH. Residues 468–497 form a disordered region; it reads PSLKSSTSTLESHKTEEPAAKKRKCPESDS. The span at 478–497 shows a compositional bias: basic and acidic residues; the sequence is ESHKTEEPAAKKRKCPESDS.

This sequence belongs to the TRM6/GCD10 family. In terms of assembly, heterotetramer; composed of two copies of TRMT6 and two copies of TRMT61A.

The protein localises to the nucleus. Its function is as follows. Substrate-binding subunit of tRNA (adenine-N(1)-)-methyltransferase, which catalyzes the formation of N(1)-methyladenine at position 58 (m1A58) in initiator methionyl-tRNA. Together with the TRMT61A catalytic subunit, part of a mRNA N(1)-methyltransferase complex that mediates methylation of adenosine residues at the N(1) position of a small subset of mRNAs: N(1) methylation takes place in tRNA T-loop-like structures of mRNAs and is only present at low stoichiometries. This Bos taurus (Bovine) protein is tRNA (adenine(58)-N(1))-methyltransferase non-catalytic subunit TRM6 (TRMT6).